Here is a 98-residue protein sequence, read N- to C-terminus: Co-chaperonin GroES (98 aa).

The segment at 32-56 (NAKEKPQQGEVLAVGPGRRDDEGKR) is disordered.

This sequence belongs to the GroES chaperonin family. In terms of assembly, heptamer of 7 subunits arranged in a ring. Interacts with the chaperonin GroEL.

It localises to the cytoplasm. In terms of biological role, together with the chaperonin GroEL, plays an essential role in assisting protein folding. The GroEL-GroES system forms a nano-cage that allows encapsulation of the non-native substrate proteins and provides a physical environment optimized to promote and accelerate protein folding. GroES binds to the apical surface of the GroEL ring, thereby capping the opening of the GroEL channel. In Bifidobacterium animalis subsp. lactis (strain AD011), this protein is Co-chaperonin GroES.